The sequence spans 631 residues: Phosphomethylpyrimidine synthase (631 aa).

A disordered region spans residues 54–80; the sequence is TLVGGDKDKPRYETNEPIPVYDTSGPY. The segment covering 58-67 has biased composition (basic and acidic residues); it reads GDKDKPRYET. Substrate-binding positions include asparagine 239, methionine 268, tyrosine 297, histidine 333, 353–355, 394–397, and glutamate 433; these read SRG and DGLR. Zn(2+) is bound at residue histidine 437. Tyrosine 460 is a binding site for substrate. Zn(2+) is bound at residue histidine 501. [4Fe-4S] cluster-binding residues include cysteine 581, cysteine 584, and cysteine 589.

This sequence belongs to the ThiC family. Homodimer. It depends on [4Fe-4S] cluster as a cofactor.

The enzyme catalyses 5-amino-1-(5-phospho-beta-D-ribosyl)imidazole + S-adenosyl-L-methionine = 4-amino-2-methyl-5-(phosphooxymethyl)pyrimidine + CO + 5'-deoxyadenosine + formate + L-methionine + 3 H(+). It participates in cofactor biosynthesis; thiamine diphosphate biosynthesis. Its function is as follows. Catalyzes the synthesis of the hydroxymethylpyrimidine phosphate (HMP-P) moiety of thiamine from aminoimidazole ribotide (AIR) in a radical S-adenosyl-L-methionine (SAM)-dependent reaction. This is Phosphomethylpyrimidine synthase from Klebsiella pneumoniae subsp. pneumoniae (strain ATCC 700721 / MGH 78578).